The primary structure comprises 478 residues: Phosphoglycerate kinase 2, chloroplastic (478 aa).

The transit peptide at 1-74 (MASTAATAAL…GKGARGVITM (74 aa)) directs the protein to the chloroplast. Residue serine 78 is modified to Phosphoserine. Residues alanine 96, aspartate 97, asparagine 99, arginine 113, threonine 135, histidine 136, glycine 138, arginine 139, arginine 194, histidine 226, and arginine 227 each contribute to the (2R)-3-phosphoglycerate site. Residue glycine 272 participates in ADP binding. Glycine 272 is a binding site for CDP. AMP contacts are provided by lysine 274 and lysine 278. Lysine 278 lines the ATP pocket. Glycine 296 serves as a coordination point for ADP. Residue glycine 296 coordinates CDP. AMP contacts are provided by glycine 297 and glycine 369. The ATP site is built by glycine 297 and glycine 369. The CDP site is built by glycine 394 and phenylalanine 399. ADP is bound at residue phenylalanine 399. Glutamate 400 contributes to the AMP binding site. Positions 400, 431, and 432 each coordinate ATP. Position 431 (aspartate 431) interacts with Mg(2+).

This sequence belongs to the phosphoglycerate kinase family. Monomer. It depends on Mg(2+) as a cofactor.

The protein resides in the plastid. It localises to the chloroplast. It carries out the reaction (2R)-3-phosphoglycerate + ATP = (2R)-3-phospho-glyceroyl phosphate + ADP. Its pathway is carbohydrate biosynthesis; Calvin cycle. The polypeptide is Phosphoglycerate kinase 2, chloroplastic (Arabidopsis thaliana (Mouse-ear cress)).